Reading from the N-terminus, the 217-residue chain is Trichothecene biosynthesis transcription regulator TRI6 (217 aa).

The segment at 185 to 215 (VRCPWHDQEGQQCLRVFSRVDNMRDHYRRIH) adopts a C2H2-type zinc-finger fold.

Its subcellular location is the nucleus. Functionally, transcriptional activator of part of the core trichothecene biosynthesis cluster. The chain is Trichothecene biosynthesis transcription regulator TRI6 from Fusarium sporotrichioides.